We begin with the raw amino-acid sequence, 553 residues long: Formate--tetrahydrofolate ligase (553 aa).

64-71 (TPAGEGKT) lines the ATP pocket.

This sequence belongs to the formate--tetrahydrofolate ligase family.

It catalyses the reaction (6S)-5,6,7,8-tetrahydrofolate + formate + ATP = (6R)-10-formyltetrahydrofolate + ADP + phosphate. It functions in the pathway one-carbon metabolism; tetrahydrofolate interconversion. In Pseudothermotoga lettingae (strain ATCC BAA-301 / DSM 14385 / NBRC 107922 / TMO) (Thermotoga lettingae), this protein is Formate--tetrahydrofolate ligase.